A 723-amino-acid polypeptide reads, in one-letter code: MSAQNIQSAGKCPVMHGANTEVGTSNMDWWPKALNLDILHQHDTKTNPMDEEFSYREAVKTLDFAAVKRDVEALMTDSQAWWPADWGHYGGLMIRMAWHAAGSYRAADGRGGANTGNQRFAPLNSWPDNANLDKARRLLWPIKKKYGNRLSWADLIVLAGNVAYESMGLKTFGFGFGREDIWHPEKDTYWGAEKEWLAPSDERYGSVDDPSTMENPLAAVQMGLIYVNPEGVNGKPDPLKTAAQVRETFARMGMNDEETVALTAGGHTVGKTHGNGRAENLGPSPEGADISEQGLGWMNHKTRGIGRDSVTSGIEGAWTTHPTKWDNGYFDMLFGHEWELKKSPAGAWQWEPVDIREEDMPVDVEDPSIRCKPIMTDADMAMREDPIYRKISERFHKDPALLTETFARAWFKLIHRDMGPKARYIGPEVPAEDLIWQDPVPAGKTGYDVDAVKAKIAASGLSIAEMVATAWDSARTFRQSDFRGGANGARIRLAPQKDWEGNEPARLQKVLAVLEPIAADSGASVADVIVLAGNVGIEQAAKAAGVNVTVPFAPGRGDATQEMTDADGFAVLEPIHDGYRNWVKKDYVVSAEELMLDRTQLMGLTAAEMTVLVGGMRVLGTNHGGAKHGVFTDKVGTLSQDFFVNLTDMNNVWKPAGAHYEIRDRKTDAVKWTATRVDLVFGSNSILRAYAEVYAQDDNQEKFVRDFVNAWTKVMNADRFDLK.

The tryptophyl-tyrosyl-methioninium (Trp-Tyr) (with M-252) cross-link spans 98-226 (WHAAGSYRAA…LAAVQMGLIY (129 aa)). H99 functions as the Proton acceptor in the catalytic mechanism. Residues 226 to 252 (YVNPEGVNGKPDPLKTAAQVRETFARM) constitute a cross-link (tryptophyl-tyrosyl-methioninium (Tyr-Met) (with W-98)). H267 lines the heme b pocket. The interval 267–286 (HTVGKTHGNGRAENLGPSPE) is disordered.

The protein belongs to the peroxidase family. Peroxidase/catalase subfamily. As to quaternary structure, homodimer or homotetramer. It depends on heme b as a cofactor. Formation of the three residue Trp-Tyr-Met cross-link is important for the catalase, but not the peroxidase activity of the enzyme.

The catalysed reaction is H2O2 + AH2 = A + 2 H2O. It carries out the reaction 2 H2O2 = O2 + 2 H2O. Functionally, bifunctional enzyme with both catalase and broad-spectrum peroxidase activity. The chain is Catalase-peroxidase from Thioalkalivibrio sulfidiphilus (strain HL-EbGR7).